A 502-amino-acid chain; its full sequence is NAD(P)H-quinone oxidoreductase chain 4, chloroplastic (502 aa).

Helical transmembrane passes span 4–24 (FPWL…IFFV), 37–57 (YTIC…CYHF), 86–106 (GLSI…TLAA), 113–131 (SRLF…VGSF), 136–156 (LLLF…LLSM), 169–189 (FILY…GMGL), 210–230 (GLEI…SPII), 244–264 (HYST…YGLV), 274–294 (AHSI…IYAA), 307–327 (IAYS…SITD), 332–352 (GAIL…FLAG), 388–408 (LALP…GIIT), 418–438 (IVIS…SLSM), and 464–484 (LFVS…PDFV).

This sequence belongs to the complex I subunit 4 family.

Its subcellular location is the plastid. It is found in the chloroplast thylakoid membrane. It catalyses the reaction a plastoquinone + NADH + (n+1) H(+)(in) = a plastoquinol + NAD(+) + n H(+)(out). The catalysed reaction is a plastoquinone + NADPH + (n+1) H(+)(in) = a plastoquinol + NADP(+) + n H(+)(out). In Calycanthus floridus var. glaucus (Eastern sweetshrub), this protein is NAD(P)H-quinone oxidoreductase chain 4, chloroplastic.